Reading from the N-terminus, the 75-residue chain is Sec-independent protein translocase protein TatA (75 aa).

A helical transmembrane segment spans residues 1–21; that stretch reads MGSFSIWHWLIVLVIIALVFG. The interval 45–75 is disordered; sequence DASADKPADQVTQQRVSDDTIDVQAKEKSNS.

Belongs to the TatA/E family. The Tat system comprises two distinct complexes: a TatABC complex, containing multiple copies of TatA, TatB and TatC subunits, and a separate TatA complex, containing only TatA subunits. Substrates initially bind to the TatABC complex, which probably triggers association of the separate TatA complex to form the active translocon.

It is found in the cell inner membrane. In terms of biological role, part of the twin-arginine translocation (Tat) system that transports large folded proteins containing a characteristic twin-arginine motif in their signal peptide across membranes. TatA could form the protein-conducting channel of the Tat system. This chain is Sec-independent protein translocase protein TatA, found in Bordetella bronchiseptica (strain ATCC BAA-588 / NCTC 13252 / RB50) (Alcaligenes bronchisepticus).